An 842-amino-acid chain; its full sequence is Molybdenum cofactor sulfurase (842 aa).

The residue at position 236 (Lys236) is an N6-(pyridoxal phosphate)lysine. The active site involves Cys402. The tract at residues Pro637–Trp680 is disordered. Positions Ser663 to Thr831 constitute an MOSC domain.

This sequence belongs to the class-V pyridoxal-phosphate-dependent aminotransferase family. MOCOS subfamily. Pyridoxal 5'-phosphate is required as a cofactor.

The enzyme catalyses Mo-molybdopterin + L-cysteine + AH2 = thio-Mo-molybdopterin + L-alanine + A + H2O. It participates in cofactor biosynthesis; molybdopterin biosynthesis. Functionally, sulfurates the molybdenum cofactor. Sulfation of molybdenum is essential for xanthine dehydrogenase (XDH) and aldehyde oxidase (ADO) enzymes in which molybdenum cofactor is liganded by 1 oxygen and 1 sulfur atom in active form. The polypeptide is Molybdenum cofactor sulfurase (Pyricularia oryzae (strain 70-15 / ATCC MYA-4617 / FGSC 8958) (Rice blast fungus)).